Here is a 265-residue protein sequence, read N- to C-terminus: S-adenosylmethionine decarboxylase proenzyme (265 aa).

Serine 114 (schiff-base intermediate with substrate; via pyruvic acid) is an active-site residue. Serine 114 bears the Pyruvic acid (Ser); by autocatalysis mark. Histidine 119 acts as the Proton acceptor; for processing activity in catalysis. Cysteine 142 acts as the Proton donor; for catalytic activity in catalysis.

This sequence belongs to the prokaryotic AdoMetDC family. Type 2 subfamily. In terms of assembly, heterooctamer of four alpha and four beta chains arranged as a tetramer of alpha/beta heterodimers. Pyruvate serves as cofactor. Is synthesized initially as an inactive proenzyme. Formation of the active enzyme involves a self-maturation process in which the active site pyruvoyl group is generated from an internal serine residue via an autocatalytic post-translational modification. Two non-identical subunits are generated from the proenzyme in this reaction, and the pyruvate is formed at the N-terminus of the alpha chain, which is derived from the carboxyl end of the proenzyme. The post-translation cleavage follows an unusual pathway, termed non-hydrolytic serinolysis, in which the side chain hydroxyl group of the serine supplies its oxygen atom to form the C-terminus of the beta chain, while the remainder of the serine residue undergoes an oxidative deamination to produce ammonia and the pyruvoyl group blocking the N-terminus of the alpha chain.

It carries out the reaction S-adenosyl-L-methionine + H(+) = S-adenosyl 3-(methylsulfanyl)propylamine + CO2. It participates in amine and polyamine biosynthesis; S-adenosylmethioninamine biosynthesis; S-adenosylmethioninamine from S-adenosyl-L-methionine: step 1/1. Its function is as follows. Catalyzes the decarboxylation of S-adenosylmethionine to S-adenosylmethioninamine (dcAdoMet), the propylamine donor required for the synthesis of the polyamines spermine and spermidine from the diamine putrescine. This is S-adenosylmethionine decarboxylase proenzyme from Buchnera aphidicola subsp. Acyrthosiphon pisum (strain 5A).